Reading from the N-terminus, the 282-residue chain is NADPH-dependent 7-cyano-7-deazaguanine reductase (282 aa).

Position 88–90 (88–90) interacts with substrate; it reads IES. 90–91 is an NADPH binding site; the sequence is SK. Cys190 functions as the Thioimide intermediate in the catalytic mechanism. Asp197 acts as the Proton donor in catalysis. 229-230 is a substrate binding site; the sequence is HE. Position 258 to 259 (258 to 259) interacts with NADPH; that stretch reads RG.

It belongs to the GTP cyclohydrolase I family. QueF type 2 subfamily. As to quaternary structure, homodimer.

It is found in the cytoplasm. It catalyses the reaction 7-aminomethyl-7-carbaguanine + 2 NADP(+) = 7-cyano-7-deazaguanine + 2 NADPH + 3 H(+). The protein operates within tRNA modification; tRNA-queuosine biosynthesis. Catalyzes the NADPH-dependent reduction of 7-cyano-7-deazaguanine (preQ0) to 7-aminomethyl-7-deazaguanine (preQ1). This is NADPH-dependent 7-cyano-7-deazaguanine reductase from Escherichia coli (strain SMS-3-5 / SECEC).